A 219-amino-acid polypeptide reads, in one-letter code: Regulatory protein YeiL (219 aa).

Positions 19–97 are sensory domain; that stretch reads RLFHFLARDY…IEECWCLALP (79 aa). Cys-68, Cys-91, Cys-93, and Cys-116 together coordinate [4Fe-4S] cluster. A dimer interface region spans residues 111–131; sequence FLRKLCVTLSHKNYRNIVSLT. The HTH crp-type domain occupies 136–199; that stretch reads FPLVNRLAAF…KKGYLIKNRK (64 aa). The segment at residues 158-181 is a DNA-binding region (H-T-H motif); sequence KHTQAAEYLGVSYRHLLYVLAQFI.

In terms of assembly, homodimer. [4Fe-4S] cluster is required as a cofactor.

It is found in the cytoplasm. Functionally, transcription regulator involved in mid-term, stationary-phase viability under nitrogen starvation. Might control expression of the salvage pathways or in some other way repress the recycling of nucleobases to nucleic acids and enhance their use as general nitrogen sources during nitrogen-limited growth. The protein is Regulatory protein YeiL (yeiL) of Escherichia coli O157:H7.